A 444-amino-acid chain; its full sequence is S-locus-specific glycoprotein BS29-1 (444 aa).

The first 28 residues, 1 to 28 (MRGVIPNYHHSYTLLFFVILVLFPHVFS), serve as a signal peptide directing secretion. Residues 31–159 (TLSPNEALTI…KTTALDRFMW (129 aa)) form the Bulb-type lectin domain. Residues N43, N125, N180, N243, and N396 are each glycosylated (N-linked (GlcNAc...) asparagine). In terms of domain architecture, PAN spans 356-437 (CGEGDGFLRM…GGQDLYLKVA (82 aa)). 2 disulfide bridges follow: C387/C412 and C395/C397.

Stigma.

Its function is as follows. Involved in sporophytic self-incompatibility system (the inability of flowering plants to achieve self-fertilization). The chain is S-locus-specific glycoprotein BS29-1 (SLSG) from Brassica oleracea var. alboglabra (Chinese kale).